The chain runs to 109 residues: UPF0060 membrane protein RC1_3291 (109 aa).

4 consecutive transmembrane segments (helical) span residues 4-24 (IATYLLAAVAEIGGCFAFWAW), 31-51 (PLWLIPGMASLALFAWALTRI), 59-79 (AYAAYGGIYILTSLVWMWLVE), and 88-108 (TLGTVLCVSGALVIIFGPRGG).

The protein belongs to the UPF0060 family.

The protein localises to the cell inner membrane. This is UPF0060 membrane protein RC1_3291 from Rhodospirillum centenum (strain ATCC 51521 / SW).